The sequence spans 433 residues: GTPase Der (433 aa).

2 EngA-type G domains span residues 3-167 and 175-347; these read NRVV…KEEK and IKVA…KDYT. GTP-binding positions include 9-16, 56-60, 119-122, 181-188, 228-232, and 293-296; these read GRPNVGKS, DTGGL, NKID, DTAGV, and NKMD. Positions 348–432 constitute a KH-like domain; sequence KQHKTSFVNR…PIKLVIKGRE (85 aa).

The protein belongs to the TRAFAC class TrmE-Era-EngA-EngB-Septin-like GTPase superfamily. EngA (Der) GTPase family. As to quaternary structure, associates with the 50S ribosomal subunit.

Its function is as follows. GTPase that plays an essential role in the late steps of ribosome biogenesis. In Aquifex aeolicus (strain VF5), this protein is GTPase Der.